The chain runs to 421 residues: Testin (421 aa).

The PET domain occupies 92–199 (MILTNPVAAK…GDVKLPCEMD (108 aa)). Residues 133-164 (EKQPVAGSEGAQYRKKQLAKQLPAHDQDPSKC) are disordered. Residues 155–164 (PAHDQDPSKC) show a composition bias toward basic and acidic residues. LIM zinc-binding domains lie at 234–297 (YSCY…CDSE), 299–359 (PRCA…NHAV), and 362–421 (QGCH…KMMS).

Belongs to the prickle / espinas / testin family. As to quaternary structure, interacts via LIM domain 1 with ZYX. Interacts (via LIM domain 3) with ENAH and VASP. Interacts with ALKBH4, talin, actin, alpha-actinin, GRIP1 and PXN. Interacts (via LIM domain 2) with ACTL7A (via N-terminus). Heterodimer with ACTL7A; the heterodimer interacts with ENAH to form a heterotrimer.

It is found in the cytoplasm. The protein localises to the cell junction. Its subcellular location is the focal adhesion. Functionally, scaffold protein that may play a role in cell adhesion, cell spreading and in the reorganization of the actin cytoskeleton. Plays a role in the regulation of cell proliferation. May act as a tumor suppressor. This chain is Testin (TES), found in Microcebus murinus (Gray mouse lemur).